The chain runs to 129 residues: Cytochrome c oxidase subunit 5B, mitochondrial (129 aa).

Residues 1–31 (MASRLLRGVGALASQALRARGPNGVSVVRSM) constitute a mitochondrion transit peptide. N6-acetyllysine occurs at positions 68 and 86. Positions 91, 93, 113, and 116 each coordinate Zn(2+). K121 carries the post-translational modification N6-acetyllysine.

Belongs to the cytochrome c oxidase subunit 5B family. As to quaternary structure, component of the cytochrome c oxidase (complex IV, CIV), a multisubunit enzyme composed of 14 subunits. The complex is composed of a catalytic core of 3 subunits MT-CO1, MT-CO2 and MT-CO3, encoded in the mitochondrial DNA, and 11 supernumerary subunits COX4I1 (or COX4I2), COX5A, COX5B, COX6A2 (or COX6A1), COX6B1 (or COX6B2), COX6C, COX7A1 (or COX7A2), COX7B, COX7C, COX8B and NDUFA4, which are encoded in the nuclear genome. The complex exists as a monomer or a dimer and forms supercomplexes (SCs) in the inner mitochondrial membrane with NADH-ubiquinone oxidoreductase (complex I, CI) and ubiquinol-cytochrome c oxidoreductase (cytochrome b-c1 complex, complex III, CIII), resulting in different assemblies (supercomplex SCI(1)III(2)IV(1) and megacomplex MCI(2)III(2)IV(2)).

The protein resides in the mitochondrion inner membrane. The protein operates within energy metabolism; oxidative phosphorylation. Its function is as follows. Component of the cytochrome c oxidase, the last enzyme in the mitochondrial electron transport chain which drives oxidative phosphorylation. The respiratory chain contains 3 multisubunit complexes succinate dehydrogenase (complex II, CII), ubiquinol-cytochrome c oxidoreductase (cytochrome b-c1 complex, complex III, CIII) and cytochrome c oxidase (complex IV, CIV), that cooperate to transfer electrons derived from NADH and succinate to molecular oxygen, creating an electrochemical gradient over the inner membrane that drives transmembrane transport and the ATP synthase. Cytochrome c oxidase is the component of the respiratory chain that catalyzes the reduction of oxygen to water. Electrons originating from reduced cytochrome c in the intermembrane space (IMS) are transferred via the dinuclear copper A center (CU(A)) of subunit 2 and heme A of subunit 1 to the active site in subunit 1, a binuclear center (BNC) formed by heme A3 and copper B (CU(B)). The BNC reduces molecular oxygen to 2 water molecules using 4 electrons from cytochrome c in the IMS and 4 protons from the mitochondrial matrix. This chain is Cytochrome c oxidase subunit 5B, mitochondrial (COX5B), found in Bos taurus (Bovine).